The following is a 271-amino-acid chain: Acyl-[acyl-carrier-protein]--UDP-N-acetylglucosamine O-acyltransferase (271 aa).

Belongs to the transferase hexapeptide repeat family. LpxA subfamily. Homotrimer.

It is found in the cytoplasm. The enzyme catalyses a (3R)-hydroxyacyl-[ACP] + UDP-N-acetyl-alpha-D-glucosamine = a UDP-3-O-[(3R)-3-hydroxyacyl]-N-acetyl-alpha-D-glucosamine + holo-[ACP]. It functions in the pathway glycolipid biosynthesis; lipid IV(A) biosynthesis; lipid IV(A) from (3R)-3-hydroxytetradecanoyl-[acyl-carrier-protein] and UDP-N-acetyl-alpha-D-glucosamine: step 1/6. Involved in the biosynthesis of lipid A, a phosphorylated glycolipid that anchors the lipopolysaccharide to the outer membrane of the cell. In Ralstonia nicotianae (strain ATCC BAA-1114 / GMI1000) (Ralstonia solanacearum), this protein is Acyl-[acyl-carrier-protein]--UDP-N-acetylglucosamine O-acyltransferase.